Reading from the N-terminus, the 438-residue chain is UDP-N-acetylmuramoylalanine--D-glutamate ligase (438 aa).

112–118 (GSNGKST) is a binding site for ATP.

The protein belongs to the MurCDEF family.

It localises to the cytoplasm. The enzyme catalyses UDP-N-acetyl-alpha-D-muramoyl-L-alanine + D-glutamate + ATP = UDP-N-acetyl-alpha-D-muramoyl-L-alanyl-D-glutamate + ADP + phosphate + H(+). The protein operates within cell wall biogenesis; peptidoglycan biosynthesis. Cell wall formation. Catalyzes the addition of glutamate to the nucleotide precursor UDP-N-acetylmuramoyl-L-alanine (UMA). The chain is UDP-N-acetylmuramoylalanine--D-glutamate ligase from Escherichia coli O6:K15:H31 (strain 536 / UPEC).